Here is a 397-residue protein sequence, read N- to C-terminus: Acetate kinase 1 (397 aa).

N8 lines the Mg(2+) pocket. K15 is a binding site for ATP. R89 contacts substrate. The active-site Proton donor/acceptor is D146. ATP is bound by residues 206 to 210, 281 to 283, and 329 to 333; these read HLGNG, DLR, and GIGEN. E382 lines the Mg(2+) pocket.

The protein belongs to the acetokinase family. As to quaternary structure, homodimer. Mg(2+) is required as a cofactor. Mn(2+) serves as cofactor.

The protein localises to the cytoplasm. The catalysed reaction is acetate + ATP = acetyl phosphate + ADP. It participates in metabolic intermediate biosynthesis; acetyl-CoA biosynthesis; acetyl-CoA from acetate: step 1/2. Its function is as follows. Catalyzes the formation of acetyl phosphate from acetate and ATP. Can also catalyze the reverse reaction. This chain is Acetate kinase 1, found in Listeria innocua serovar 6a (strain ATCC BAA-680 / CLIP 11262).